We begin with the raw amino-acid sequence, 147 residues long: Transthyretin (147 aa).

Positions Met1–Ala20 are cleaved as a signal peptide. At Cys30 the chain carries Sulfocysteine. Lys35 provides a ligand contact to L-thyroxine. Glu62 is subject to 4-carboxyglutamate. Glu74 lines the L-thyroxine pocket. Residue Asn118 is glycosylated (N-linked (GlcNAc...) asparagine). L-thyroxine is bound at residue Ser137.

It belongs to the transthyretin family. Homotetramer. Dimer of dimers. In the homotetramer, subunits assemble around a central channel that can accommodate two ligand molecules. Interacts with RBP4. Sulfonation of the reactive cysteine Cys-30 enhances the stability of the native conformation of TTR, avoiding misassembly of the protein leading to amyloid formation. As to expression, detected in serum (at protein level). Detected in liver.

Its subcellular location is the secreted. Thyroid hormone-binding protein. Probably transports thyroxine from the bloodstream to the brain. The polypeptide is Transthyretin (TTR) (Sorex araneus (Eurasian common shrew)).